The primary structure comprises 582 residues: Potassium-transporting ATPase potassium-binding subunit (582 aa).

11 consecutive transmembrane segments (helical) span residues leucine 6–tyrosine 26, isoleucine 65–glutamate 85, leucine 87–valine 107, glycine 136–isoleucine 156, valine 178–valine 198, leucine 277–isoleucine 297, leucine 304–alanine 324, glycine 402–glycine 422, alanine 441–isoleucine 461, isoleucine 505–leucine 525, and glycine 546–valine 566.

It belongs to the KdpA family. The system is composed of three essential subunits: KdpA, KdpB and KdpC.

The protein localises to the cell inner membrane. Functionally, part of the high-affinity ATP-driven potassium transport (or Kdp) system, which catalyzes the hydrolysis of ATP coupled with the electrogenic transport of potassium into the cytoplasm. This subunit binds the periplasmic potassium ions and delivers the ions to the membrane domain of KdpB through an intramembrane tunnel. The protein is Potassium-transporting ATPase potassium-binding subunit of Solidesulfovibrio magneticus (strain ATCC 700980 / DSM 13731 / RS-1) (Desulfovibrio magneticus).